A 202-amino-acid polypeptide reads, in one-letter code: Cryptic protein (202 aa).

Residues 1–35 (MRANSPTQGISLKMHQARPLFLVTVALQLIGLGYS) form the signal peptide. N-linked (GlcNAc...) asparagine glycosylation occurs at asparagine 65. The region spanning 94–123 (PVSRCCHNGGTCVLGSFCVCPAYFTGRYCE) is the EGF-like domain. Intrachain disulfides connect cysteine 98–cysteine 105, cysteine 99–cysteine 111, and cysteine 113–cysteine 122. Residue aspartate 166 is the site of GPI-anchor amidated aspartate attachment. A propeptide spans 167-202 (LKSFLSSGARGSRECSIPSLLLLVLCLLLQGVAGKG) (removed in mature form).

The protein belongs to the EGF-CFC (Cripto-1/FRL1/Cryptic) family. N-glycosylated. No expressed in adult tissues.

It is found in the cell membrane. It localises to the secreted. Nodal coreceptor involved in the correct establishment of the left-right axis. May play a role in mesoderm and/or neural patterning during gastrulation. This Mus musculus (Mouse) protein is Cryptic protein (Cfc1).